Consider the following 367-residue polypeptide: MTALQNDTFLRALRRQPTEYTPLWLMRQAGRYLPEYNATRARAGSFLGLAKNPAYATEVTLQPLDRYPLDAAILFSDILTVPDAMGLGLSFAQGEGPRFAHPLRTEADVAKLAVPDMASLQYVFDAVSEIRKALVQDGRQRVPLIGFSGSPWTLACYMVEGGGSDDFRTVKAMMYARPDLMHRILDINATAVSAYLNAQIEAGAQAVMVFDTWGGALADGMYQAFSLAYMRKVLQGLKREHDGQQIPVIVFTKGGGIWLEEIAGIGPDAIGLDWTVNLAKARRRTEGRVALQGNIDPTVLFASESAIREQVRGVLDSYASAGGSDGHVFNLGHGISQFTPPENVSVLVDEVHNHSRKLRAGQVAAAV.

Residues R27 to R31, D77, Y157, T212, and H333 each bind substrate.

This sequence belongs to the uroporphyrinogen decarboxylase family. As to quaternary structure, homodimer.

Its subcellular location is the cytoplasm. It carries out the reaction uroporphyrinogen III + 4 H(+) = coproporphyrinogen III + 4 CO2. It participates in porphyrin-containing compound metabolism; protoporphyrin-IX biosynthesis; coproporphyrinogen-III from 5-aminolevulinate: step 4/4. In terms of biological role, catalyzes the decarboxylation of four acetate groups of uroporphyrinogen-III to yield coproporphyrinogen-III. This is Uroporphyrinogen decarboxylase from Cupriavidus metallidurans (strain ATCC 43123 / DSM 2839 / NBRC 102507 / CH34) (Ralstonia metallidurans).